We begin with the raw amino-acid sequence, 49 residues long: Small, acid-soluble spore protein O (49 aa).

Residues 1–49 (MGKRKANHTISGMNAASAQGQGTGYNEEFANEPLTPAERQNNKKRKKNQ) form a disordered region. A compositionally biased stretch (polar residues) spans 8–20 (HTISGMNAASAQG).

This sequence belongs to the SspO family.

The protein localises to the spore core. The protein is Small, acid-soluble spore protein O of Bacillus cereus (strain B4264).